We begin with the raw amino-acid sequence, 195 residues long: uncharacterized protein (195 aa).

Disordered stretches follow at residues 1-54 (MPKG…SNKI) and 173-195 (LAGA…KPIS). A compositionally biased stretch (basic and acidic residues) spans 7–20 (KPNEKKEELEKFAK). The span at 45–54 (QNDSSSSNKI) shows a compositional bias: polar residues. A coiled-coil region spans residues 48-97 (SSSSNKIVLSQAEKDLLRTELDKTEEEISTLKQVLSARQKHAAELKRKLG).

This sequence belongs to the TPD52 family.

This is an uncharacterized protein from Caenorhabditis elegans.